Consider the following 90-residue polypeptide: Probable Fe(2+)-trafficking protein (90 aa).

This sequence belongs to the Fe(2+)-trafficking protein family.

In terms of biological role, could be a mediator in iron transactions between iron acquisition and iron-requiring processes, such as synthesis and/or repair of Fe-S clusters in biosynthetic enzymes. The polypeptide is Probable Fe(2+)-trafficking protein (Chromobacterium violaceum (strain ATCC 12472 / DSM 30191 / JCM 1249 / CCUG 213 / NBRC 12614 / NCIMB 9131 / NCTC 9757 / MK)).